The primary structure comprises 438 residues: Aflatoxin cluster transcriptional coactivator aflS (438 aa).

Residues 65–134 (LALYNQLLAC…PSPGHVAHSV (70 aa)) enclose the HTH iclR-type domain. Positions 95–114 (FEDVADIAGVPECRLRRLVR) form a DNA-binding region, H-T-H motif.

In terms of assembly, interacts with aflR.

Its subcellular location is the nucleus. Its function is as follows. Transcription factor; part of the gene cluster that mediates the biosynthesis of aflatoxin, a polyketide-derived furanocoumarin which is part of the most toxic and carcinogenic compounds among the known mycotoxins. AflS exhibits no DNA-binding capability on its own, but forms a complex with the other aflatoxin cluster transcription factor aflR and acts as a modulator of aflR's DNA-binding by decreasing its DNA-binding affinity. The protein is Aflatoxin cluster transcriptional coactivator aflS of Aspergillus flavus (strain ATCC 200026 / FGSC A1120 / IAM 13836 / NRRL 3357 / JCM 12722 / SRRC 167).